A 175-amino-acid chain; its full sequence is Nucleoplasmin-3 (175 aa).

The residue at position 2 (alanine 2) is an N-acetylalanine. Serine 16 is subject to Phosphoserine. Arginine 27 carries the omega-N-methylarginine modification. Phosphoserine is present on residues serine 147 and serine 151.

The protein belongs to the nucleoplasmin family. As to quaternary structure, interacts with NPM (via N-terminus). Forms a pentamer with NPM at a ratio 4:1 (NPM3/NPM). Two pentamers form a decamer. Post-translationally, phosphorylated. As to expression, predominantly expressed in testis.

It is found in the nucleus. The protein localises to the nucleolus. Its function is as follows. Plays a role in the regulation of diverse cellular processes such as ribosome biogenesis, chromatin remodeling or protein chaperoning. Modulates the histone chaperone function and the RNA-binding activity of nucleolar phosphoprotein B23/NPM. Efficiently mediates chromatin remodeling when included in a pentamer containing NPM3 and NPM. The chain is Nucleoplasmin-3 (Npm3) from Mus musculus (Mouse).